A 127-amino-acid chain; its full sequence is MQDDPRYRVEVEVSPRFLAHQSTPDEGRYAFAYSIRIQNAGAVPARLVARHWQITDGNGRTEQVDGEGVVGEQPWLRPGEAFHYTSGVLLETEQGQMQGHYDMVADDGTEFIAPIAAFVLSVPRTLH.

The 125-residue stretch at 3–127 folds into the ApaG domain; the sequence is DDPRYRVEVE…FVLSVPRTLH (125 aa).

This Xanthomonas axonopodis pv. citri (strain 306) protein is Protein ApaG.